The primary structure comprises 260 residues: Reaction center protein H chain (260 aa).

Topologically, residues 1–11 (MVGVTAFGNFD) are periplasmic. Residues 12–31 (LASLAIYSFWIFLAGLIYYL) traverse the membrane as a helical segment. The Cytoplasmic segment spans residues 32–260 (QTENMREGYP…VVAAMLAEYA (229 aa)).

It belongs to the reaction center PuhA family. As to quaternary structure, heterotrimer composed of subunits L, M, and H. The cofactor is a bacteriochlorophyll. It depends on a bacteriopheophytin as a cofactor. Requires Fe cation as cofactor. Mg(2+) is required as a cofactor. A ubiquinone serves as cofactor.

The protein localises to the cellular chromatophore membrane. Functionally, the reaction center is a membrane-bound complex that mediates the initial photochemical event in the electron transfer process of photosynthesis. This chain is Reaction center protein H chain (puhA), found in Cereibacter sphaeroides (strain ATCC 17023 / DSM 158 / JCM 6121 / CCUG 31486 / LMG 2827 / NBRC 12203 / NCIMB 8253 / ATH 2.4.1.) (Rhodobacter sphaeroides).